A 542-amino-acid polypeptide reads, in one-letter code: Sensor protein CitS (542 aa).

Topologically, residues 1 to 13 are cytoplasmic; that stretch reads MVKKRFHFSLQTK. A helical membrane pass occupies residues 14–34; it reads IMGLIAALLVFVIGVLTITLA. Residues 35-175 are Extracellular-facing; it reads VQHTQGERRQ…TEQSIKKHLR (141 aa). A helical membrane pass occupies residues 176-196; it reads NLSVIAVLVLLLGFIGAAVLA. The Cytoplasmic segment spans residues 197-542; that stretch reads KSIRKDTLGL…PFDSHRDCGG (346 aa). A PAS domain is found at 216-279; it reads RERNAMLFAI…MSVLEKGEML (64 aa). The Histidine kinase domain maps to 336–528; that stretch reads AQTHEFSNKL…VFTVFIPKEK (193 aa). A Phosphohistidine; by autocatalysis modification is found at H339.

Its subcellular location is the cell membrane. The catalysed reaction is ATP + protein L-histidine = ADP + protein N-phospho-L-histidine.. Member of the two-component regulatory system CitT/CitS. Regulates the expression of the citM-yflN operon. Functions probably as a membrane-associated protein kinase that phosphorylates CitT in response to environmental citrate or Mg(2+)-citrate complex. This is Sensor protein CitS (citS) from Bacillus subtilis (strain 168).